The following is a 155-amino-acid chain: uncharacterized protein (155 aa).

2 helical membrane-spanning segments follow: residues 33-53 (ITLL…LFLL) and 83-103 (IGAV…GIWV).

To E.coli YdgK.

Its subcellular location is the cell membrane. This is an uncharacterized protein from Synechocystis sp. (strain ATCC 27184 / PCC 6803 / Kazusa).